We begin with the raw amino-acid sequence, 620 residues long: Ferric/cupric reductase transmembrane component 7 (620 aa).

Over 1–45 (MIEERDLVLSNGIHCIADIHSELYARLKKESQAVTPWVYQKQYGK) the chain is Extracellular. Residues 46–66 (FVTYFVAVIIFLSLIKKLAFM) traverse the membrane as a helical segment. The Cytoplasmic segment spans residues 67–107 (YYDSSEEFLPEKKNSPTTPSVFLARIMTKLVAFNRYICYRK). Residues 108-128 (FPTLIFSYLGIPTSVGTFLVV) traverse the membrane as a helical segment. Over 129–167 (MATTLYTLLYCFVPHPFYRPCAGFGSPPLSVRAGIMAIS) the chain is Extracellular. The 160-residue stretch at 161 to 320 (AGIMAISLVS…LAVKGYLRPG (160 aa)) folds into the Ferric oxidoreductase domain. Residues 168 to 188 (LVSFVFSLSGKINVIGWLVGL) traverse the membrane as a helical segment. Residues 189-194 (SYEKIN) are Cytoplasmic-facing. The chain crosses the membrane as a helical span at residues 195–215 (IYHQWASILCLFFSWVHVIPF). Heme-binding residues include H197 and H211. Over 216–237 (LRQARHEGGYERMHQRWKASDM) the chain is Extracellular. Residues 238–258 (WRSGVPPILFLNLLWLSSLPI) form a helical membrane-spanning segment. Residues 259 to 265 (ARRHFYE) lie on the Cytoplasmic side of the membrane. Residues 266 to 286 (IFLQLHWILAVGFYISLFYHV) form a helical membrane-spanning segment. Heme-binding residues include H271 and H285. Residues 287–292 (YPELNS) are Extracellular-facing. Residues 293–313 (HMYLVATIVVWFAQLFYRLAV) traverse the membrane as a helical segment. Residues 314 to 620 (KGYLRPGRSF…CYLHSESFGY (307 aa)) are Cytoplasmic-facing. Residues 321–419 (RSFMASTIAN…DGPYGGIERD (99 aa)) enclose the FAD-binding FR-type domain. Residue 369-375 (HPFSIFP) coordinates FAD. The tract at residues 519-544 (SDQSDLAKREKDTEFGQDDTESNSTF) is disordered. Over residues 523-532 (DLAKREKDTE) the composition is skewed to basic and acidic residues.

This sequence belongs to the ferric reductase (FRE) family. FAD is required as a cofactor.

Its subcellular location is the cell membrane. The enzyme catalyses 2 a Fe(II)-siderophore + NADP(+) + H(+) = 2 a Fe(III)-siderophore + NADPH. Its function is as follows. Cell surface metalloreductase. May be involved in copper homeostasis. The polypeptide is Ferric/cupric reductase transmembrane component 7 (FRE7) (Saccharomyces cerevisiae (strain YJM789) (Baker's yeast)).